Consider the following 257-residue polypeptide: Acetylglutamate kinase (257 aa).

Residues 43 to 44 (GG), R65, and N157 contribute to the substrate site. ATP-binding positions include 180–185 (DVSGIL) and 208–210 (IIT).

The protein belongs to the acetylglutamate kinase family. ArgB subfamily. As to quaternary structure, homodimer.

It is found in the cytoplasm. The catalysed reaction is N-acetyl-L-glutamate + ATP = N-acetyl-L-glutamyl 5-phosphate + ADP. The protein operates within amino-acid biosynthesis; L-arginine biosynthesis; N(2)-acetyl-L-ornithine from L-glutamate: step 2/4. Catalyzes the ATP-dependent phosphorylation of N-acetyl-L-glutamate. This chain is Acetylglutamate kinase, found in Enterobacter sp. (strain 638).